A 433-amino-acid polypeptide reads, in one-letter code: Enolase (433 aa).

Q167 contributes to the (2R)-2-phosphoglycerate binding site. The Proton donor role is filled by E209. Mg(2+) is bound by residues D246, E291, and D318. 4 residues coordinate (2R)-2-phosphoglycerate: K343, R372, S373, and K394. The active-site Proton acceptor is K343.

This sequence belongs to the enolase family. In terms of assembly, component of the RNA degradosome, a multiprotein complex involved in RNA processing and mRNA degradation. Requires Mg(2+) as cofactor.

Its subcellular location is the cytoplasm. It is found in the secreted. The protein resides in the cell surface. It catalyses the reaction (2R)-2-phosphoglycerate = phosphoenolpyruvate + H2O. It functions in the pathway carbohydrate degradation; glycolysis; pyruvate from D-glyceraldehyde 3-phosphate: step 4/5. Functionally, catalyzes the reversible conversion of 2-phosphoglycerate (2-PG) into phosphoenolpyruvate (PEP). It is essential for the degradation of carbohydrates via glycolysis. The chain is Enolase from Tolumonas auensis (strain DSM 9187 / NBRC 110442 / TA 4).